Reading from the N-terminus, the 401-residue chain is Argininosuccinate synthase (401 aa).

9–17 (AYSGGLDTS) is an ATP binding site. Tyr86 contacts L-citrulline. Position 116 (Gly116) interacts with ATP. 3 residues coordinate L-aspartate: Thr118, Asn122, and Asp123. Asn122 is a binding site for L-citrulline. L-citrulline-binding residues include Arg126, Ser174, Ser183, Glu259, and Tyr271.

This sequence belongs to the argininosuccinate synthase family. Type 1 subfamily. In terms of assembly, homotetramer.

The protein resides in the cytoplasm. The enzyme catalyses L-citrulline + L-aspartate + ATP = 2-(N(omega)-L-arginino)succinate + AMP + diphosphate + H(+). It functions in the pathway amino-acid biosynthesis; L-arginine biosynthesis; L-arginine from L-ornithine and carbamoyl phosphate: step 2/3. This Bacillus cytotoxicus (strain DSM 22905 / CIP 110041 / 391-98 / NVH 391-98) protein is Argininosuccinate synthase.